Here is a 498-residue protein sequence, read N- to C-terminus: MQARELIQKFITKVSTFPETTYTAEDEQYLFNVVLDLVGEGDETPVVAQETTTLIDLKEALVQLAVDHQRIQDLAAERDILGAKLMDLVTPLPSAVNKRFWTLYEKDPEKALAYFYELSQANDYIKVAAIAKNIAYDVPTKYGDLEITINLSKPEKDPKQIALAKTMKQTGYPKCQLCLENEGYAGRLDFPARRNHRIVRFDLEQQTWGFQYSPYAYFNEHSIFLDGKHEPMVIDQTTFKNLLQIVKQFPGYFAGSNADLPIVGGSILTHEHYQGGRHDFPMAKAPISTPLQFAGYDDIQAGIVEWPMSVMRLTGSDAKRIETLAADILTKWQHYSDPEVQVLAQEADGTPHHTITPIARMRGDQYEIDLVLRDNQTSPEHPDGIYHPHADVQHIKKENIGLIEVMGLAILPPRLKSEMAEVEKYLCDQPNEMAAYHKTWADQIKADHSAITPANVTTLVQNEVGKVFMRVLEDAGVFKRDAKGQAAFIKFTERVNNA.

Belongs to the galactose-1-phosphate uridylyltransferase type 2 family.

The protein localises to the cytoplasm. The catalysed reaction is alpha-D-galactose 1-phosphate + UDP-alpha-D-glucose = alpha-D-glucose 1-phosphate + UDP-alpha-D-galactose. Its pathway is carbohydrate metabolism; galactose metabolism. This is Galactose-1-phosphate uridylyltransferase from Latilactobacillus sakei subsp. sakei (strain 23K) (Lactobacillus sakei subsp. sakei).